The sequence spans 381 residues: Succinyl-diaminopimelate desuccinylase (381 aa).

Zn(2+) is bound at residue histidine 68. Aspartate 70 is an active-site residue. Aspartate 101 is a Zn(2+) binding site. Glutamate 135 acts as the Proton acceptor in catalysis. Residues glutamate 136, glutamate 164, and histidine 350 each coordinate Zn(2+).

Belongs to the peptidase M20A family. DapE subfamily. As to quaternary structure, homodimer. Zn(2+) is required as a cofactor. The cofactor is Co(2+).

It catalyses the reaction N-succinyl-(2S,6S)-2,6-diaminopimelate + H2O = (2S,6S)-2,6-diaminopimelate + succinate. It participates in amino-acid biosynthesis; L-lysine biosynthesis via DAP pathway; LL-2,6-diaminopimelate from (S)-tetrahydrodipicolinate (succinylase route): step 3/3. Its function is as follows. Catalyzes the hydrolysis of N-succinyl-L,L-diaminopimelic acid (SDAP), forming succinate and LL-2,6-diaminopimelate (DAP), an intermediate involved in the bacterial biosynthesis of lysine and meso-diaminopimelic acid, an essential component of bacterial cell walls. In Neisseria meningitidis serogroup A / serotype 4A (strain DSM 15465 / Z2491), this protein is Succinyl-diaminopimelate desuccinylase.